Here is a 169-residue protein sequence, read N- to C-terminus: Chorion protein E1 (169 aa).

The first 19 residues, 1 to 19, serve as a signal peptide directing secretion; sequence MAWFTTVLIVASLLGSLVA. 2 Tetradecapeptide repeats span residues 114-127 and 128-141; these read GAGR…KPRS and GAGK…KPKS. The segment at 119–169 is disordered; sequence AEMEGKPRSGAGKGAEMEGKPKSTESVAETNTVAAGTGVVAEKTGTESSAS. Residues 142-152 are compositionally biased toward polar residues; it reads TESVAETNTVA.

In terms of biological role, this protein is one of two components of the prominent 'filler' that helps mold the shape of aeropyle crowns. The chain is Chorion protein E1 from Antheraea polyphemus (Polyphemus moth).